Consider the following 293-residue polypeptide: Glutamyl-Q tRNA(Asp) synthetase (293 aa).

L-glutamate-binding positions include 8–12 (RFAPT) and E44. Positions 11 to 21 (PTPSGYLHFGS) match the 'HIGH' region motif. Zn(2+) contacts are provided by C100, C102, Y114, and C118. L-glutamate-binding residues include Y171 and R189. Positions 227-231 (KLGKS) match the 'KMSKS' region motif. ATP is bound at residue K230.

This sequence belongs to the class-I aminoacyl-tRNA synthetase family. GluQ subfamily. Zn(2+) is required as a cofactor.

Catalyzes the tRNA-independent activation of glutamate in presence of ATP and the subsequent transfer of glutamate onto a tRNA(Asp). Glutamate is transferred on the 2-amino-5-(4,5-dihydroxy-2-cyclopenten-1-yl) moiety of the queuosine in the wobble position of the QUC anticodon. The polypeptide is Glutamyl-Q tRNA(Asp) synthetase (Pseudomonas paraeruginosa (strain DSM 24068 / PA7) (Pseudomonas aeruginosa (strain PA7))).